We begin with the raw amino-acid sequence, 167 residues long: Large ribosomal subunit protein uL15 (167 aa).

Residues 1 to 10 (MKLNQISDNP) are compositionally biased toward polar residues. The segment at 1-37 (MKLNQISDNPGATKDRMRVGRGIGSGKGKTAGRGVKG) is disordered. The segment covering 21-35 (RGIGSGKGKTAGRGV) has biased composition (gly residues).

Belongs to the universal ribosomal protein uL15 family. As to quaternary structure, part of the 50S ribosomal subunit.

Binds to the 23S rRNA. This Methylobacterium radiotolerans (strain ATCC 27329 / DSM 1819 / JCM 2831 / NBRC 15690 / NCIMB 10815 / 0-1) protein is Large ribosomal subunit protein uL15.